We begin with the raw amino-acid sequence, 264 residues long: Hemin import ATP-binding protein HmuV (264 aa).

In terms of domain architecture, ABC transporter spans 2 to 241 (IEVSGVSVRL…ETMLSVFGLR (240 aa)). Position 34–41 (34–41 (GPNGSGKT)) interacts with ATP.

The protein belongs to the ABC transporter superfamily. Heme (hemin) importer (TC 3.A.1.14.5) family. The complex is composed of two ATP-binding proteins (HmuV), two transmembrane proteins (HmuU) and a solute-binding protein (HmuT).

Its subcellular location is the cell inner membrane. Part of the ABC transporter complex HmuTUV involved in hemin import. Responsible for energy coupling to the transport system. In Rhizobium leguminosarum, this protein is Hemin import ATP-binding protein HmuV.